A 125-amino-acid polypeptide reads, in one-letter code: Snaclec alboaggregin-A subunit beta (125 aa).

A C-type lectin domain is found at 1-125; that stretch reads GFDCPFGWSS…TRYPVCKFXG (125 aa). Cystine bridges form between cysteine 4–cysteine 15, cysteine 32–cysteine 121, and cysteine 98–cysteine 113.

It belongs to the snaclec family. Heterotetramer of the subunits alpha, alpha', beta and beta'; disulfide-linked. As to expression, expressed by the venom gland.

The protein localises to the secreted. Its function is as follows. Potent platelet activator that aggregates platelets via both GPIbalpha (GP1BA) and GPVI (GP6). Induces a tyrosine phosphorylation profile in platelets that resembles this produced by collagen, involving the time dependent tyrosine phosphorylation of Fc receptor gamma chain (FCGR1A), phospholipase Cgamma2 (PLCG2), and LAT. This Trimeresurus albolabris (White-lipped pit viper) protein is Snaclec alboaggregin-A subunit beta.